The following is a 659-amino-acid chain: MTSTSKAVELQLQVKHNAEELQDFMRDLEHWEKTMRQKDLELRRQSGVPEENLPPIRNGSFRKKKKRKTKDSSKKTKEENTKNRIKSFDYDAWAKLDVDSILDELDKEDSTHDSVSQESESDEDGVRVDSQKALVLKEKGNKYFKQGKYDEAIECYTKGMDADPYNPVLPTNRASAYFRLKKFAVAESDCNLAIALSRSYTKAYARRGAARFALQKLEDARKDYVKVLELEPDNFEATNELRKIDQALTSKENSHPKDIAAVIKPAEGERKANEDQRGRQKAIAEKDLGNGFFKEGKYEQAIECYTRGIAADSTNALLPANRAMAYLKVQKYEEAERDCTQAILLDGSYSKAFARRGTARTFLGKINEAKQDFETVLLLEPGNKQAVTELSRIKKELIEKGRWDDVFLDSTQRHNVVKPVDSPHRGSPKALKKVFIEETGNLIESVDAPESSATVPESDRAAVAVDTGRKKDFSQGDSVSSGETPRAKVLKIEAVGDSSAPQAQVDVKQGVRQSVSEKTSVRVAQTPGQLAAVVLPPVPANSFQLESDFRQLRSSPEMLYQYVKKIEPSLYPKLFQKNLDPDVFNQIIKILHDFYVEREKPALIFEVLERLSQLRRFDMAVMFMSGTERELTKVLFNHLEKSELKEDSVEELKKRYGGG.

Thr-2 carries the post-translational modification N-acetylthreonine. Residues 8 to 41 (VELQLQVKHNAEELQDFMRDLEHWEKTMRQKDLE) form a TPR 1 repeat. The interval 39–81 (DLELRRQSGVPEENLPPIRNGSFRKKKKRKTKDSSKKTKEENT) is disordered. Positions 60 to 69 (SFRKKKKRKT) are enriched in basic residues. Positions 70–81 (KDSSKKTKEENT) are enriched in basic and acidic residues. 4 positions are modified to phosphoserine: Ser-87, Ser-116, Ser-119, and Ser-121. The tract at residues 107–128 (KEDSTHDSVSQESESDEDGVRV) is disordered. TPR repeat units follow at residues 133–166 (ALVL…DPYN), 168–200 (VLPT…SRSY), 201–234 (TKAY…EPDN), 282–315 (AIAE…DSTN), 317–349 (LLPA…DGSY), and 350–383 (SKAF…EPGN). The segment at 447-485 (DAPESSATVPESDRAAVAVDTGRKKDFSQGDSVSSGETP) is disordered. A Phosphoserine modification is found at Ser-474. A Glycyl lysine isopeptide (Lys-Gly) (interchain with G-Cter in SUMO2) cross-link involves residue Lys-491.

It belongs to the RPAP3 family. Tightly associated with the RNA polymerase II complex. Component of the R2TP complex composed at least of RUVBL1, RUVBL2, RPAP3 and PIHD1. Component of the PAQosome complex which is responsible for the biogenesis of several protein complexes and which consists of R2TP complex members RUVBL1, RUVBL2, RPAP3 and PIH1D1, URI complex members PFDN2, PFDN6, PDRG1, UXT and URI1 as well as ASDURF, POLR2E and DNAAF10/WDR92. Interacts with PIH1D1. Interacts with TSC1 and TSC2. Interacts with PRPF8 and EFTUD2 in a ZNHIT2-dependent manner.

In terms of biological role, forms an interface between the RNA polymerase II enzyme and chaperone/scaffolding protein, suggesting that it is required to connect RNA polymerase II to regulators of protein complex formation. The polypeptide is RNA polymerase II-associated protein 3 (Rpap3) (Rattus norvegicus (Rat)).